The sequence spans 211 residues: Probable septum site-determining protein MinC (211 aa).

It belongs to the MinC family. Interacts with MinD and FtsZ.

Its function is as follows. Cell division inhibitor that blocks the formation of polar Z ring septums. Rapidly oscillates between the poles of the cell to destabilize FtsZ filaments that have formed before they mature into polar Z rings. Prevents FtsZ polymerization. This is Probable septum site-determining protein MinC from Clostridium perfringens (strain 13 / Type A).